Consider the following 230-residue polypeptide: 7-cyano-7-deazaguanine synthase (230 aa).

10–20 (LSGGLDSATTA) lines the ATP pocket. The Zn(2+) site is built by Cys191, Cys199, Cys202, and Cys205.

The protein belongs to the QueC family. The cofactor is Zn(2+).

It catalyses the reaction 7-carboxy-7-deazaguanine + NH4(+) + ATP = 7-cyano-7-deazaguanine + ADP + phosphate + H2O + H(+). It functions in the pathway purine metabolism; 7-cyano-7-deazaguanine biosynthesis. Its function is as follows. Catalyzes the ATP-dependent conversion of 7-carboxy-7-deazaguanine (CDG) to 7-cyano-7-deazaguanine (preQ(0)). This chain is 7-cyano-7-deazaguanine synthase, found in Gloeothece citriformis (strain PCC 7424) (Cyanothece sp. (strain PCC 7424)).